The chain runs to 236 residues: Phosphoribosylaminoimidazole-succinocarboxamide synthase (236 aa).

It belongs to the SAICAR synthetase family.

The catalysed reaction is 5-amino-1-(5-phospho-D-ribosyl)imidazole-4-carboxylate + L-aspartate + ATP = (2S)-2-[5-amino-1-(5-phospho-beta-D-ribosyl)imidazole-4-carboxamido]succinate + ADP + phosphate + 2 H(+). The protein operates within purine metabolism; IMP biosynthesis via de novo pathway; 5-amino-1-(5-phospho-D-ribosyl)imidazole-4-carboxamide from 5-amino-1-(5-phospho-D-ribosyl)imidazole-4-carboxylate: step 1/2. The polypeptide is Phosphoribosylaminoimidazole-succinocarboxamide synthase (Pseudomonas paraeruginosa (strain DSM 24068 / PA7) (Pseudomonas aeruginosa (strain PA7))).